Here is a 234-residue protein sequence, read N- to C-terminus: Preflagellin peptidase (234 aa).

Methionine 1 is a topological domain (cytoplasmic). Residues 2–18 form a helical membrane-spanning segment; sequence INFIVGAIGLLIASIYD. Residues 19–23 are Extracellular-facing; the sequence is LKSRE. Residues 24-46 traverse the membrane as a helical segment; that stretch reads IEDYVWVSMVIFGLIYNGYLSFI. Residues 47-49 lie on the Cytoplasmic side of the membrane; the sequence is SHD. Residues 50–72 form a helical membrane-spanning segment; the sequence is MLYVIQSIVGFIVCFFLGFFMFL. At 73 to 78 the chain is on the extracellular side; the sequence is LGVGGG. A helical transmembrane segment spans residues 79 to 89; the sequence is DGKLIMGLGAL. The Cytoplasmic segment spans residues 90–110; sequence IPKYNMPIHTPLGAILNYLYL. The chain crosses the membrane as a helical span at residues 111–139; the sequence is PSFPIMVVINAMFFSITLPIIIFLRNVIR. Residues 140–205 are Extracellular-facing; the sequence is GVKPKTKKEV…EEIWVTPAIP (66 aa). Residues 206–217 form a helical membrane-spanning segment; that stretch reads FVVPIFLSYLLT. Residues 218–234 are Cytoplasmic-facing; sequence SIIGDKIIGIFLSVFGL.

Belongs to the peptidase A24 family. Archaeal preflagellin peptidase subfamily.

The protein localises to the cell membrane. It catalyses the reaction Cleaves the signal peptide of 3 to 12 amino acids from the N-terminal of preflagellin, usually at Arg-Gly-|- or Lys-Gly-|-, to release flagellin.. In terms of biological role, cleaves the N-terminal leader peptide from preflagellins. The chain is Preflagellin peptidase (flaK) from Methanocaldococcus jannaschii (strain ATCC 43067 / DSM 2661 / JAL-1 / JCM 10045 / NBRC 100440) (Methanococcus jannaschii).